The sequence spans 116 residues: Flagellar transcriptional regulator FlhD (116 aa).

The protein belongs to the FlhD family. Homodimer; disulfide-linked. Forms a heterohexamer composed of two FlhC and four FlhD subunits. Each FlhC binds a FlhD dimer, forming a heterotrimer, and a hexamer assembles by dimerization of two heterotrimers.

The protein localises to the cytoplasm. Functions in complex with FlhC as a master transcriptional regulator that regulates transcription of several flagellar and non-flagellar operons by binding to their promoter region. Activates expression of class 2 flagellar genes, including fliA, which is a flagellum-specific sigma factor that turns on the class 3 genes. Also regulates genes whose products function in a variety of physiological pathways. This Pectobacterium carotovorum subsp. carotovorum (strain PC1) protein is Flagellar transcriptional regulator FlhD.